The following is a 431-amino-acid chain: Serine hydroxymethyltransferase (431 aa).

(6S)-5,6,7,8-tetrahydrofolate contacts are provided by residues leucine 128 and 132-134 (GHL). Position 237 is an N6-(pyridoxal phosphate)lysine (lysine 237).

It belongs to the SHMT family. In terms of assembly, homodimer. Requires pyridoxal 5'-phosphate as cofactor.

The protein localises to the cytoplasm. It catalyses the reaction (6R)-5,10-methylene-5,6,7,8-tetrahydrofolate + glycine + H2O = (6S)-5,6,7,8-tetrahydrofolate + L-serine. Its pathway is one-carbon metabolism; tetrahydrofolate interconversion. It participates in amino-acid biosynthesis; glycine biosynthesis; glycine from L-serine: step 1/1. Functionally, catalyzes the reversible interconversion of serine and glycine with tetrahydrofolate (THF) serving as the one-carbon carrier. This reaction serves as the major source of one-carbon groups required for the biosynthesis of purines, thymidylate, methionine, and other important biomolecules. Also exhibits THF-independent aldolase activity toward beta-hydroxyamino acids, producing glycine and aldehydes, via a retro-aldol mechanism. This Ruegeria sp. (strain TM1040) (Silicibacter sp.) protein is Serine hydroxymethyltransferase.